Consider the following 581-residue polypeptide: Bifunctional lycopene cyclase/phytoene synthase (581 aa).

Residues 1–243 (MGFDYALVHL…IVFGQLAFDN (243 aa)) form a lycopene beta-cyclase region. Transmembrane regions (helical) follow at residues 3–23 (FDYA…LTLL), 35–55 (KVAF…SYLI), 65–85 (HVII…FFVV), 120–140 (LKRL…WFCV), 152–172 (ILIW…QFII), 173–193 (GLPF…LWIV), and 221–241 (IEEA…QLAF). The phytoene synthase stretch occupies residues 250–581 (AFPHLFPDPS…RVLVAWRTLN (332 aa)).

It in the N-terminal section; belongs to the lycopene beta-cyclase family. This sequence in the C-terminal section; belongs to the phytoene/squalene synthase family.

The protein localises to the membrane. It catalyses the reaction all-trans-lycopene = gamma-carotene. It carries out the reaction gamma-carotene = all-trans-beta-carotene. The enzyme catalyses 2 (2E,6E,10E)-geranylgeranyl diphosphate = 15-cis-phytoene + 2 diphosphate. The protein operates within carotenoid biosynthesis; beta-carotene biosynthesis. It participates in carotenoid biosynthesis; phytoene biosynthesis; all-trans-phytoene from geranylgeranyl diphosphate: step 1/1. Functionally, bifunctional enzyme that catalyzes the reactions from geranylgeranyl diphosphate to phytoene (phytoene synthase) and lycopene to beta-carotene via the intermediate gamma-carotene (lycopene cyclase). The sequence is that of Bifunctional lycopene cyclase/phytoene synthase from Leptosphaeria maculans (strain JN3 / isolate v23.1.3 / race Av1-4-5-6-7-8) (Blackleg fungus).